The sequence spans 427 residues: 3-phosphoshikimate 1-carboxyvinyltransferase (427 aa).

3 residues coordinate 3-phosphoshikimate: Lys-23, Ser-24, and Arg-28. Lys-23 contributes to the phosphoenolpyruvate binding site. Phosphoenolpyruvate contacts are provided by Gly-97 and Arg-125. 7 residues coordinate 3-phosphoshikimate: Ser-169, Ser-170, Gln-171, Ser-197, Asp-313, Asn-336, and Lys-340. Position 171 (Gln-171) interacts with phosphoenolpyruvate. Residue Asp-313 is the Proton acceptor of the active site. Phosphoenolpyruvate contacts are provided by Arg-344, Arg-386, and Lys-411.

The protein belongs to the EPSP synthase family. As to quaternary structure, monomer.

It localises to the cytoplasm. The enzyme catalyses 3-phosphoshikimate + phosphoenolpyruvate = 5-O-(1-carboxyvinyl)-3-phosphoshikimate + phosphate. It participates in metabolic intermediate biosynthesis; chorismate biosynthesis; chorismate from D-erythrose 4-phosphate and phosphoenolpyruvate: step 6/7. Its function is as follows. Catalyzes the transfer of the enolpyruvyl moiety of phosphoenolpyruvate (PEP) to the 5-hydroxyl of shikimate-3-phosphate (S3P) to produce enolpyruvyl shikimate-3-phosphate and inorganic phosphate. This Yersinia ruckeri protein is 3-phosphoshikimate 1-carboxyvinyltransferase.